The following is a 415-amino-acid chain: Putative F-box protein At5g40050 (415 aa).

The F-box domain occupies isoleucine 13–serine 59.

This Arabidopsis thaliana (Mouse-ear cress) protein is Putative F-box protein At5g40050.